A 304-amino-acid polypeptide reads, in one-letter code: Ribosomal RNA small subunit methyltransferase H (304 aa).

Residues 47–49 (GGH), Asp-66, Phe-93, Asp-108, and Gln-115 each bind S-adenosyl-L-methionine.

Belongs to the methyltransferase superfamily. RsmH family.

Its subcellular location is the cytoplasm. The enzyme catalyses cytidine(1402) in 16S rRNA + S-adenosyl-L-methionine = N(4)-methylcytidine(1402) in 16S rRNA + S-adenosyl-L-homocysteine + H(+). Functionally, specifically methylates the N4 position of cytidine in position 1402 (C1402) of 16S rRNA. This chain is Ribosomal RNA small subunit methyltransferase H, found in Prochlorococcus marinus (strain NATL2A).